The chain runs to 151 residues: Sec-independent protein translocase protein TatB (151 aa).

Residues 1–21 (MFDVSFTELMVIGVIALVVIG) form a helical membrane-spanning segment. The tract at residues 66 to 151 (MDETARSMQT…DKTPPTGSAT (86 aa)) is disordered. A compositionally biased stretch (basic and acidic residues) spans 93–103 (AELDDTARDAS). Composition is skewed to low complexity over residues 109-122 (ADAP…VASD) and 133-151 (APPA…GSAT).

Belongs to the TatB family. In terms of assembly, the Tat system comprises two distinct complexes: a TatABC complex, containing multiple copies of TatA, TatB and TatC subunits, and a separate TatA complex, containing only TatA subunits. Substrates initially bind to the TatABC complex, which probably triggers association of the separate TatA complex to form the active translocon.

Its subcellular location is the cell inner membrane. Its function is as follows. Part of the twin-arginine translocation (Tat) system that transports large folded proteins containing a characteristic twin-arginine motif in their signal peptide across membranes. Together with TatC, TatB is part of a receptor directly interacting with Tat signal peptides. TatB may form an oligomeric binding site that transiently accommodates folded Tat precursor proteins before their translocation. The chain is Sec-independent protein translocase protein TatB from Bordetella parapertussis (strain 12822 / ATCC BAA-587 / NCTC 13253).